Here is a 31-residue protein sequence, read N- to C-terminus: Cycloviolacin-O19 (31 aa).

A cross-link (cyclopeptide (Gly-Asp)) is located at residues 1–31 (GTLPCGESCVWIPCISSVVGCSCKSKVCYKD). 3 cysteine pairs are disulfide-bonded: cysteine 5–cysteine 21, cysteine 9–cysteine 23, and cysteine 14–cysteine 28.

This is a cyclic peptide. In terms of tissue distribution, expressed in petioles and runners but not in leaves, petals and roots (at protein level).

In terms of biological role, probably participates in a plant defense mechanism. In Viola odorata (Sweet violet), this protein is Cycloviolacin-O19.